The primary structure comprises 340 residues: Phosphoribosylformylglycinamidine cyclo-ligase (340 aa).

It belongs to the AIR synthase family.

It is found in the cytoplasm. The enzyme catalyses 2-formamido-N(1)-(5-O-phospho-beta-D-ribosyl)acetamidine + ATP = 5-amino-1-(5-phospho-beta-D-ribosyl)imidazole + ADP + phosphate + H(+). The protein operates within purine metabolism; IMP biosynthesis via de novo pathway; 5-amino-1-(5-phospho-D-ribosyl)imidazole from N(2)-formyl-N(1)-(5-phospho-D-ribosyl)glycinamide: step 2/2. The protein is Phosphoribosylformylglycinamidine cyclo-ligase of Streptococcus pneumoniae serotype 2 (strain D39 / NCTC 7466).